The primary structure comprises 282 residues: Putative 4-diphosphocytidyl-2-C-methyl-D-erythritol kinase (282 aa).

Residue Lys10 is part of the active site. Pro94–Ser104 contacts ATP. Asp136 is a catalytic residue.

It belongs to the GHMP kinase family. IspE subfamily.

The enzyme catalyses 4-CDP-2-C-methyl-D-erythritol + ATP = 4-CDP-2-C-methyl-D-erythritol 2-phosphate + ADP + H(+). Catalyzes the phosphorylation of the position 2 hydroxy group of 4-diphosphocytidyl-2C-methyl-D-erythritol. This chain is Putative 4-diphosphocytidyl-2-C-methyl-D-erythritol kinase (ipk), found in Streptococcus mutans serotype c (strain ATCC 700610 / UA159).